Consider the following 233-residue polypeptide: Hydroxyacylglutathione hydrolase (233 aa).

The Zn(2+) site is built by His52, His54, Asp56, His57, His108, Asp125, and His163.

Belongs to the metallo-beta-lactamase superfamily. Glyoxalase II family. In terms of assembly, monomer. The cofactor is Zn(2+).

It catalyses the reaction an S-(2-hydroxyacyl)glutathione + H2O = a 2-hydroxy carboxylate + glutathione + H(+). It functions in the pathway secondary metabolite metabolism; methylglyoxal degradation; (R)-lactate from methylglyoxal: step 2/2. In terms of biological role, thiolesterase that catalyzes the hydrolysis of S-D-lactoyl-glutathione to form glutathione and D-lactic acid. In Histophilus somni (strain 129Pt) (Haemophilus somnus), this protein is Hydroxyacylglutathione hydrolase.